We begin with the raw amino-acid sequence, 410 residues long: MARAKFERNKPHVNIGTIGHVDHGKTTLTAAITMTLAASGGAKARKYDDIDAAPEEKQRGITINTAHVEYETEQRHYAHVDCPGHADYVKNMITGAAQMDGAILVVSAADGPMPQTREHILLAKQVGVPSIVVFLNKADMVDDEELLELVELEVRELLSSYDFPGDDIPIVSGSALKALDFLTENPKTTRGENDWVDKIHALMDEVDAYIPTPERDIDKGLLDGLWEDVFSITGRGTVSTAGIERGKVKVGDTVELIGIKDTRTTTVTGAEMFQKTLEEGMAGDNVGLLLRGIQKNDVQRGMVIAKPKSITPHTKFEAEVYILKKEEGGRHTPFFKGYRPQFYVRTTDVTGTIDEFTADDGSTPEMVIPGDRINMTVQLICPIAIEQGMRFAIREGGRTVGAGVVAKILA.

A tr-type G domain is found at K10–E214. Residues G19 to T26 are G1. G19–T26 lines the GTP pocket. Residue T26 coordinates Mg(2+). The G2 stretch occupies residues G60–N64. A G3 region spans residues D81–G84. GTP contacts are provided by residues D81–H85 and N136–D139. Residues N136–D139 form a G4 region. The segment at S174–L176 is G5.

The protein belongs to the TRAFAC class translation factor GTPase superfamily. Classic translation factor GTPase family. EF-Tu/EF-1A subfamily. Monomer.

Its subcellular location is the cytoplasm. The enzyme catalyses GTP + H2O = GDP + phosphate + H(+). Its function is as follows. GTP hydrolase that promotes the GTP-dependent binding of aminoacyl-tRNA to the A-site of ribosomes during protein biosynthesis. The protein is Elongation factor Tu of Arthrospira platensis (Spirulina platensis).